The chain runs to 526 residues: MERLPLSPAVLFLIIVLPILYLWIRYTAPARPHGKHLSLPPGPPRLPKIGNLHQVPRQIPWKKYKEWSDTYGPIMSVQLADTIAVVFSSWDLIKNHIERRNTIYSSRPSVPFFLHATGGLNASILPYGPEWKLQRAIRSSVLKPSMTVKYRDVQHVETTQLLHELLSTNDFPVCLRRCIASVFLTVAYGERCVDHAGLEAIDRLEELNRAIALHAEALFSGAAGILTQLVLPKALVDRLPVRWKKDADMLHNRLTADLVARTRAALVRPGWNWVKEFSMKDGIGSGDGDGEQGSKVELKRLAYMVGSLYEASMAASQALRVIILAGLLHPDATRRMHDELDAVVGTGRLPDFHDAAQLPYTQAFIKEAMRWRSLTPMGSPRATSDEDECRGYHIPCGATVLVNVWAINHDEAIFLDPFAFQPERWIENPDLPQLMYGMGQRACPGRHMGQDSLFLATARLFWAFDMALPDGADPIDQERFLDSGTTLAAFLPDFEVRFTPRSEKYQEVIENSMAVLPDVLSISATP.

The helical transmembrane segment at 4-24 (LPLSPAVLFLIIVLPILYLWI) threads the bilayer. Cysteine 443 is a heme binding site.

Belongs to the cytochrome P450 family. The cofactor is heme.

The protein resides in the membrane. The enzyme catalyses tryprostatin A + reduced [NADPH--hemoprotein reductase] + O2 = fumitremorgin C + oxidized [NADPH--hemoprotein reductase] + 2 H2O + H(+). It functions in the pathway mycotoxin biosynthesis. Cytochrome P450 monooxygenase; part of the gene cluster that mediates the biosynthesis of fumitremorgins, indole alkaloids that carry not only intriguing chemical structures, but also interesting biological and pharmacological activities. The biosynthesis of fumitremorgin-type alkaloids begins by condensation of the two amino acids L-tryptophan and L-proline to brevianamide F, catalyzed by the non-ribosomal peptide synthetase ftmA. Brevianamide F is then prenylated by the prenyltransferase ftmPT1/ftmB in the presence of dimethylallyl diphosphate, resulting in the formation of tryprostatin B. The three cytochrome P450 monooxygenases, ftmP450-1/ftmC, ftmP450-2/ftmE and ftmP450-3/FtmG, are responsible for the conversion of tryprostatin B to 6-hydroxytryprostatin B, tryprostatin A to fumitremorgin C and fumitremorgin C to 12,13-dihydroxyfumitremorgin C, respectively. The putative methyltransferase ftmMT/ftmD is expected for the conversion of 6-hydroxytryprostatin B to tryprostatin A. FtmPT2/FtmH catalyzes the prenylation of 12,13-dihydroxyfumitre-morgin C in the presence of dimethylallyl diphosphate, resulting in the formation of fumitremorgin B. Fumitremorgin B is further converted to verruculogen by ftmOx1/ftmF via the insertion of an endoperoxide bond between the two prenyl moieties. In some fungal species, verruculogen is further converted to fumitremorgin A, but the enzymes involved in this step have not been identified yet. This is Fumitremorgin C synthase from Aspergillus fumigatus (Neosartorya fumigata).